The sequence spans 546 residues: (-)-5-epieremophilene synthase STPS3 (546 aa).

Positions 299, 303, 442, 446, and 450 each coordinate Mg(2+). A DDXXD motif motif is present at residues Asp299–Asp303.

Belongs to the terpene synthase family. Tpsa subfamily. As to quaternary structure, monomer. Mg(2+) is required as a cofactor. As to expression, highly expressed in flowers and at lower levels in leaves.

The catalysed reaction is (2E,6E)-farnesyl diphosphate = (-)-5-epi-eremophilene + diphosphate. It functions in the pathway secondary metabolite biosynthesis; terpenoid biosynthesis. Functionally, sesquiterpene synthase that catalyzes the conversion of farnesyl diphosphate to (-)-5-epi-eremophilene. The polypeptide is (-)-5-epieremophilene synthase STPS3 (Salvia miltiorrhiza (Chinese sage)).